The chain runs to 550 residues: Carboxypeptidase Y homolog A (550 aa).

An N-terminal signal peptide occupies residues 1 to 18 (MKSLVLGLLVGSAIASGP). A propeptide spanning residues 19 to 131 (LQHVLHAPPE…KLAQYDLRIR (113 aa)) is cleaved from the precursor. 5 cysteine pairs are disulfide-bonded: C185–C424, C319–C333, C343–C366, C350–C359, and C388–C394. N216 carries an N-linked (GlcNAc...) asparagine glycan. S272 is an active-site residue. D463 is an active-site residue. N-linked (GlcNAc...) asparagine glycans are attached at residues N493 and N514. The active site involves H525.

It belongs to the peptidase S10 family.

It is found in the vacuole. It carries out the reaction Release of a C-terminal amino acid with broad specificity.. Vacuolar carboxypeptidase involved in degradation of small peptides. Digests preferentially peptides containing an aliphatic or hydrophobic residue in P1' position, as well as methionine, leucine or phenylalanine in P1 position of ester substrate. In Paracoccidioides lutzii (strain ATCC MYA-826 / Pb01) (Paracoccidioides brasiliensis), this protein is Carboxypeptidase Y homolog A (CPYA).